The chain runs to 187 residues: 2-oxoglutarate synthase subunit KorC (187 aa).

In terms of assembly, heterotetramer of the KorA, KorB, KorC and KorD subunits.

It carries out the reaction 2 oxidized [2Fe-2S]-[ferredoxin] + 2-oxoglutarate + CoA = succinyl-CoA + 2 reduced [2Fe-2S]-[ferredoxin] + CO2 + H(+). In Methanocaldococcus jannaschii (strain ATCC 43067 / DSM 2661 / JAL-1 / JCM 10045 / NBRC 100440) (Methanococcus jannaschii), this protein is 2-oxoglutarate synthase subunit KorC (korC).